Reading from the N-terminus, the 611-residue chain is MTQPQMAPICLVENHNEQLSVNQEAIEILDKISQPVVVVAIVGLYRTGKSYLMNCLAGQNHGFPLGSTVQSQTKGIWMWCMPHPTKPEHTLVLLDTEGLGDVEKGDPKNDLWIFALSVLLSSTFIYNSMITINHQALEQLQYVTELTELIRAKSSPNPAGIKNSTEFVSFFPDFVWTVRDFMLELKLNGEDITSDDYLENALKLIPGDKPRMQASNSCRECIRLFFPNRKCFVFDRPTHDKELLQKLDSITEDQLDPKFQEVTKAFVSYIFTYAKIKTLKEGIKVTGNRLGILVTTYVNAINSGAVPCLDDAVTTLAQRENSVAVQKAADHYSEQMAQRLRLPTETLQELLDVHAACEKEAMAVFMEHSFKDENQQFLKKLVELIGENKELFLSKNEEASNKYCQEELDRLSKDFMENISTFFVPCGHKLYMDKREKIEHDYWQVPRKGVKASEVFQSFLQSQAFIESSILQADTALTAGEKAIAEERAQKVAAEKEQELLRQKQKEQQEYMEAQEKSHKENLEQLRRKLEQEREQDIKDHDMMLKKLMKDQKAFLEEGFKKKAEEMNKEIQQLRDVIKDKKRNTDRIKEALLNGFSTVLFHYLVRYLKHL.

A GTPase domain (Globular) region spans residues 1 to 308 (MTQPQMAPIC…NAINSGAVPC (308 aa)). One can recognise a GB1/RHD3-type G domain in the interval 33–275 (SQPVVVVAIV…FVSYIFTYAK (243 aa)). GTP contacts are provided by residues 43–50 (GLYRTGKS), 65–67 (LGS), and 95–99 (DTEGL).

The protein belongs to the TRAFAC class dynamin-like GTPase superfamily. GB1/RHD3 GTPase family. GB1 subfamily.

It localises to the cytoplasmic vesicle. It carries out the reaction GTP + H2O = GDP + phosphate + H(+). Functionally, interferon (IFN)-inducible GTPase that plays important roles in innate immunity against a diverse range of bacterial, viral and protozoan pathogens, such as bacterial pathogens Listeria monocytogenes and Mycobacterium bovis BCG as well as the protozoan pathogen Toxoplasma gondii. Confers protection to several pathogens, including the bacterial pathogens Listeria monocytogenes and Mycobacterium bovis BCG as well as the protozoan pathogen Toxoplasma gondii. The polypeptide is Guanylate-binding protein 6 (Gbp6) (Mus musculus (Mouse)).